Here is a 369-residue protein sequence, read N- to C-terminus: Putative agmatine deiminase 2 (369 aa).

Catalysis depends on cysteine 356, which acts as the Amidino-cysteine intermediate.

It belongs to the agmatine deiminase family.

It carries out the reaction agmatine + H2O = N-carbamoylputrescine + NH4(+). The sequence is that of Putative agmatine deiminase 2 from Listeria monocytogenes serovar 1/2a (strain ATCC BAA-679 / EGD-e).